We begin with the raw amino-acid sequence, 114 residues long: MIKTLFNKNTALAAVAILALSGSAMAESAKTHKTDMAKKKVSELTCEDFNGLEESFKPTVVGWVVGFNKKGKEEDAVIDVDGIETVTPAIIEACKQEPKASFWKKAEAELKKVF.

The signal sequence occupies residues 1-26; the sequence is MIKTLFNKNTALAAVAILALSGSAMA. Cys46 and Cys94 are disulfide-bonded.

It belongs to the HdeA family.

It is found in the periplasm. Its function is as follows. Required for optimal acid stress protection. Exhibits a chaperone-like activity only at low pH by suppressing non-specifically the aggregation of denaturated periplasmic proteins. The sequence is that of Probable acid stress chaperone HdeA from Brucella ovis (strain ATCC 25840 / 63/290 / NCTC 10512).